Here is a 555-residue protein sequence, read N- to C-terminus: Formate--tetrahydrofolate ligase (555 aa).

ATP is bound at residue Thr-65–Thr-72.

The protein belongs to the formate--tetrahydrofolate ligase family.

The catalysed reaction is (6S)-5,6,7,8-tetrahydrofolate + formate + ATP = (6R)-10-formyltetrahydrofolate + ADP + phosphate. It functions in the pathway one-carbon metabolism; tetrahydrofolate interconversion. The sequence is that of Formate--tetrahydrofolate ligase from Syntrophomonas wolfei subsp. wolfei (strain DSM 2245B / Goettingen).